A 484-amino-acid chain; its full sequence is tRNA-2-methylthio-N(6)-dimethylallyladenosine synthase (484 aa).

Residues 36–153 (GKLYIKTHGC…LPELIRARRE (118 aa)) form the MTTase N-terminal domain. [4Fe-4S] cluster is bound by residues Cys45, Cys82, Cys116, Cys190, Cys194, and Cys197. The Radical SAM core domain maps to 176-415 (RAEGPSAFVS…HISAHAASIS (240 aa)). The 64-residue stretch at 416–479 (QSMVGSVQRV…SNSLRGRIQL (64 aa)) folds into the TRAM domain. Positions 428-450 (EGPSRRDPNELTGKSENMRPVNF) are disordered.

The protein belongs to the methylthiotransferase family. MiaB subfamily. As to quaternary structure, monomer. [4Fe-4S] cluster is required as a cofactor.

Its subcellular location is the cytoplasm. The catalysed reaction is N(6)-dimethylallyladenosine(37) in tRNA + (sulfur carrier)-SH + AH2 + 2 S-adenosyl-L-methionine = 2-methylsulfanyl-N(6)-dimethylallyladenosine(37) in tRNA + (sulfur carrier)-H + 5'-deoxyadenosine + L-methionine + A + S-adenosyl-L-homocysteine + 2 H(+). Its function is as follows. Catalyzes the methylthiolation of N6-(dimethylallyl)adenosine (i(6)A), leading to the formation of 2-methylthio-N6-(dimethylallyl)adenosine (ms(2)i(6)A) at position 37 in tRNAs that read codons beginning with uridine. This is tRNA-2-methylthio-N(6)-dimethylallyladenosine synthase from Xanthomonas oryzae pv. oryzae (strain PXO99A).